We begin with the raw amino-acid sequence, 144 residues long: Transcriptional regulator SlyA (144 aa).

An HTH marR-type domain is found at 2 to 135; it reads ESPLGSDLSR…LSQMISKLEK (134 aa). The segment at residues 49–72 is a DNA-binding region (H-T-H motif); sequence QIQLAKAIGIEQPSLVRTLDQLEE.

It belongs to the SlyA family. As to quaternary structure, homodimer.

Its function is as follows. Transcription regulator that can specifically activate or repress expression of target genes. The chain is Transcriptional regulator SlyA from Wigglesworthia glossinidia brevipalpis.